Consider the following 431-residue polypeptide: Keratin, type I cytoskeletal 18 (431 aa).

The interval 2–83 (SLRTSYSVRS…SGSTGEIMGN (82 aa)) is head. A Phosphoserine modification is found at S12. A Phosphothreonine modification is found at T13. A phosphoserine mark is found at S22 and S36. The tract at residues 84 to 119 (EKMAMQNLNDRLASYLEKVRILEQANSKLELKIREA) is coil 1A. The region spanning 84-395 (EKMAMQNLND…RLLDGGDFKL (312 aa)) is the IF rod domain. Residues 120–136 (LEKRGPDVHDYSRFQPI) form a linker 1 region. The segment at 137–228 (VDELRKKIFD…KNHDNEVMEL (92 aa)) is coil 1B. Positions 229–252 (RNQISQSGVQVDVDAPKGQDLSQI) are linker 12. Residues 253 to 390 (MEEIRAKYEK…IATYRRLLDG (138 aa)) are coil 2. Residues 391 to 431 (GDFKLQDALEEQKKVKVMTVTQTLVDGKVVSSSTETKERKL) form a tail region.

It belongs to the intermediate filament family. Heterotetramer of two type I and two type II keratins. Keratin-18 associates with keratin-8. Proteolytically cleaved by caspases during epithelial cell apoptosis. As to expression, expressed in simple epithelia such as intestinal mucosa, bile duct, hepatocytes, renal tubules, endothelia, ocular lens epithelium, and in a variety of mesenchymally-derived cells such as blood vessel endothelia, pillar gill cells, optic nerve glial cells, fibroblasts, interstitial cells, chondrocytes and ovarian theca cells. Also expressed in epidermis, pharyngeal mucosa, mucosa of anterior esophagus, gill mucosa and cornea.

Functionally, when phosphorylated, plays a role in filament reorganization. This chain is Keratin, type I cytoskeletal 18, found in Danio rerio (Zebrafish).